Consider the following 217-residue polypeptide: Insulin-like growth factor 2.S (217 aa).

The N-terminal stretch at 1–56 is a signal peptide; sequence MEQLSCKHRSSSVEAEAQLCRQTESRSTQLPRMSVMRHLFLLSITFLVYTLDSAKA. A b region spans residues 57 to 83; it reads YRATETLCGGELVDTLQFVCGDRGFYF. Disulfide bonds link Cys-64-Cys-103, Cys-76-Cys-116, and Cys-102-Cys-107. Residues 84-96 form a c region; it reads STNNGRSNRRPNR. The a stretch occupies residues 97–117; the sequence is GIVDVCCFKSCDLELLETYCA. Residues 118-123 form a d region; that stretch reads KPTKNE. Residues 124-217 constitute a propeptide, e peptide; that stretch reads RDVSTAPATA…LQQASEPSHN (94 aa).

Belongs to the insulin family.

Its subcellular location is the secreted. Functionally, the insulin-like growth factors, isolated from plasma, are structurally and functionally related to insulin but have a much higher growth-promoting activity. Promotes anterior neural development. Acts as a ligand for integrin which is required for IGF2 signaling. This is Insulin-like growth factor 2.S from Xenopus laevis (African clawed frog).